A 687-amino-acid polypeptide reads, in one-letter code: DNA-directed RNA polymerase subunit beta' (687 aa).

Cys69, Cys71, Cys87, and Cys90 together coordinate Zn(2+). Residues Asp495, Asp497, and Asp499 each contribute to the Mg(2+) site.

The protein belongs to the RNA polymerase beta' chain family. RpoC1 subfamily. In plastids the minimal PEP RNA polymerase catalytic core is composed of four subunits: alpha, beta, beta', and beta''. When a (nuclear-encoded) sigma factor is associated with the core the holoenzyme is formed, which can initiate transcription. Mg(2+) is required as a cofactor. Zn(2+) serves as cofactor.

Its subcellular location is the plastid. It localises to the chloroplast. It carries out the reaction RNA(n) + a ribonucleoside 5'-triphosphate = RNA(n+1) + diphosphate. Functionally, DNA-dependent RNA polymerase catalyzes the transcription of DNA into RNA using the four ribonucleoside triphosphates as substrates. The sequence is that of DNA-directed RNA polymerase subunit beta' from Solanum tuberosum (Potato).